The following is a 610-amino-acid chain: ATP-dependent zinc metalloprotease FtsH (610 aa).

At methionine 1–asparagine 5 the chain is on the cytoplasmic side. A helical membrane pass occupies residues isoleucine 6–phenylalanine 26. The Periplasmic segment spans residues tyrosine 27–phenylalanine 107. A helical transmembrane segment spans residues tryptophan 108 to isoleucine 128. Residues methionine 129–glutamate 610 are Cytoplasmic-facing. ATP is bound by residues glycine 164, glycine 204–threonine 208, leucine 209, histidine 343, and glutamate 371. Histidine 423 is a binding site for Zn(2+). Residue glutamate 424 is part of the active site. Zn(2+) contacts are provided by histidine 427 and aspartate 500.

In the central section; belongs to the AAA ATPase family. It in the C-terminal section; belongs to the peptidase M41 family. The isolated ADP-bound cytosolic domain forms a 6-fold symmetric protease disk and a 2-fold symmetric AAA ATPase ring. In the absence of nucleotide the AAA ATPase ring also forms symmetric hexamers. Zn(2+) is required as a cofactor.

It is found in the cell inner membrane. Acts as a processive, ATP-dependent zinc metallopeptidase for both cytoplasmic and membrane proteins. Plays a role in the quality control of integral membrane proteins. This chain is ATP-dependent zinc metalloprotease FtsH, found in Thermotoga maritima (strain ATCC 43589 / DSM 3109 / JCM 10099 / NBRC 100826 / MSB8).